A 230-amino-acid polypeptide reads, in one-letter code: Ribonuclease 3 (230 aa).

The RNase III domain maps to 6–135 (VSELRARYGI…FNGALFLDQG (130 aa)). Glu-48 lines the Mg(2+) pocket. The active site involves Asp-52. The Mg(2+) site is built by Asp-121 and Glu-124. Glu-124 is a catalytic residue. The region spanning 161–230 (DYKTNLQEFL…AKKALEQLKA (70 aa)) is the DRBM domain.

This sequence belongs to the ribonuclease III family. As to quaternary structure, homodimer. Requires Mg(2+) as cofactor.

Its subcellular location is the cytoplasm. It catalyses the reaction Endonucleolytic cleavage to 5'-phosphomonoester.. Its function is as follows. Digests double-stranded RNA. Involved in the processing of primary rRNA transcript to yield the immediate precursors to the large and small rRNAs (23S and 16S). Processes some mRNAs, and tRNAs when they are encoded in the rRNA operon. Processes pre-crRNA and tracrRNA of type II CRISPR loci if present in the organism. This chain is Ribonuclease 3, found in Latilactobacillus sakei subsp. sakei (strain 23K) (Lactobacillus sakei subsp. sakei).